Consider the following 638-residue polypeptide: Chaperone protein DnaK (638 aa).

A Phosphothreonine; by autocatalysis modification is found at threonine 200. Positions 599–623 (LHMAATAEQQSASTGAGAGSSAKVD) are disordered. Residues 609-620 (SASTGAGAGSSA) show a composition bias toward low complexity.

Belongs to the heat shock protein 70 family.

Functionally, acts as a chaperone. This is Chaperone protein DnaK from Xylella fastidiosa (strain M12).